Consider the following 507-residue polypeptide: Histidine ammonia-lyase (507 aa).

The segment at residues Ala-145–Gly-147 is a cross-link (5-imidazolinone (Ala-Gly)). Ser-146 carries the post-translational modification 2,3-didehydroalanine (Ser).

The protein belongs to the PAL/histidase family. Post-translationally, contains an active site 4-methylidene-imidazol-5-one (MIO), which is formed autocatalytically by cyclization and dehydration of residues Ala-Ser-Gly.

The protein localises to the cytoplasm. The catalysed reaction is L-histidine = trans-urocanate + NH4(+). It participates in amino-acid degradation; L-histidine degradation into L-glutamate; N-formimidoyl-L-glutamate from L-histidine: step 1/3. This is Histidine ammonia-lyase from Treponema denticola (strain ATCC 35405 / DSM 14222 / CIP 103919 / JCM 8153 / KCTC 15104).